The chain runs to 682 residues: 1,4-alpha-glucan-branching enzyme (682 aa).

(1,4-alpha-D-glucosyl)n contacts are provided by Trp88 and Lys124. Asp342 acts as the Nucleophile in catalysis. The active-site Proton donor is Glu397.

This sequence belongs to the glycosyl hydrolase 13 family. GlgB subfamily.

The protein resides in the cytoplasm. It carries out the reaction Transfers a segment of a (1-&gt;4)-alpha-D-glucan chain to a primary hydroxy group in a similar glucan chain.. The protein operates within glycan biosynthesis; glycogen biosynthesis. Functionally, glycogen-branching enzyme participates in the glycogen biosynthetic process along with glycogenin and glycogen synthase. Generates alpha-1,6-glucosidic branches from alpha-1,4-linked glucose chains, to increase solubility of the glycogen polymer. This chain is 1,4-alpha-glucan-branching enzyme, found in Cryptococcus neoformans var. grubii serotype A (strain H99 / ATCC 208821 / CBS 10515 / FGSC 9487) (Filobasidiella neoformans var. grubii).